The primary structure comprises 431 residues: Enolase (431 aa).

(2R)-2-phosphoglycerate is bound at residue Q167. Catalysis depends on E209, which acts as the Proton donor. Residues D246, E290, and D317 each coordinate Mg(2+). 4 residues coordinate (2R)-2-phosphoglycerate: K342, R371, S372, and K393. Residue K342 is the Proton acceptor of the active site.

The protein belongs to the enolase family. In terms of assembly, component of the RNA degradosome, a multiprotein complex involved in RNA processing and mRNA degradation. Mg(2+) is required as a cofactor.

It is found in the cytoplasm. It localises to the secreted. The protein localises to the cell surface. The catalysed reaction is (2R)-2-phosphoglycerate = phosphoenolpyruvate + H2O. It participates in carbohydrate degradation; glycolysis; pyruvate from D-glyceraldehyde 3-phosphate: step 4/5. Catalyzes the reversible conversion of 2-phosphoglycerate (2-PG) into phosphoenolpyruvate (PEP). It is essential for the degradation of carbohydrates via glycolysis. The polypeptide is Enolase (Yersinia enterocolitica serotype O:8 / biotype 1B (strain NCTC 13174 / 8081)).